Here is a 475-residue protein sequence, read N- to C-terminus: UDP-N-acetylmuramate--L-alanine ligase (475 aa).

ATP is bound at residue 119–125; the sequence is GTHGKTT.

The protein belongs to the MurCDEF family.

The protein resides in the cytoplasm. It carries out the reaction UDP-N-acetyl-alpha-D-muramate + L-alanine + ATP = UDP-N-acetyl-alpha-D-muramoyl-L-alanine + ADP + phosphate + H(+). Its pathway is cell wall biogenesis; peptidoglycan biosynthesis. Cell wall formation. In Wigglesworthia glossinidia brevipalpis, this protein is UDP-N-acetylmuramate--L-alanine ligase.